Here is a 514-residue protein sequence, read N- to C-terminus: Serine--tRNA ligase, cytoplasmic (514 aa).

Met-1 is modified (N-acetylmethionine). Residues Arg-9 to Ser-61 are interaction with tRNA. At Ser-241 the chain carries Phosphoserine. L-serine-binding residues include Thr-271 and Arg-302. Residues Arg-302 to Glu-304 and Val-318 to Phe-321 each bind ATP. Lys-323 bears the N6-acetyllysine mark. Glu-325 is a binding site for L-serine. Glu-391 to Ser-394 contributes to the ATP binding site. Residue Asn-427 participates in L-serine binding. Positions Pro-475–Ala-514 are disordered. Basic and acidic residues predominate over residues Glu-479–Ala-501. The Nuclear localization signal motif lies at Lys-482–Lys-494. A compositionally biased stretch (polar residues) spans Ser-504–Ala-514.

This sequence belongs to the class-II aminoacyl-tRNA synthetase family. Type-1 seryl-tRNA synthetase subfamily. Homodimer. The tRNA molecule may bind across the dimer. Interacts with SIRT2. Interacts with METTL6; interaction is required for the tRNA N(3)-methylcytidine methyltransferase activity of METTL6.

The protein resides in the cytoplasm. The protein localises to the nucleus. It catalyses the reaction tRNA(Ser) + L-serine + ATP = L-seryl-tRNA(Ser) + AMP + diphosphate + H(+). It carries out the reaction tRNA(Sec) + L-serine + ATP = L-seryl-tRNA(Sec) + AMP + diphosphate + H(+). Its pathway is aminoacyl-tRNA biosynthesis; selenocysteinyl-tRNA(Sec) biosynthesis; L-seryl-tRNA(Sec) from L-serine and tRNA(Sec): step 1/1. In terms of biological role, catalyzes the attachment of serine to tRNA(Ser) in a two-step reaction: serine is first activated by ATP to form Ser-AMP and then transferred to the acceptor end of tRNA(Ser). Is probably also able to aminoacylate tRNA(Sec) with serine, to form the misacylated tRNA L-seryl-tRNA(Sec), which will be further converted into selenocysteinyl-tRNA(Sec). In the nucleus, binds to the VEGFA core promoter and prevents MYC binding and transcriptional activation by MYC. Recruits SIRT2 to the VEGFA promoter, promoting deacetylation of histone H4 at 'Lys-16' (H4K16). Thereby, inhibits the production of VEGFA and sprouting angiogenesis mediated by VEGFA. The sequence is that of Serine--tRNA ligase, cytoplasmic (SARS1) from Bos taurus (Bovine).